The chain runs to 488 residues: N-succinylglutamate 5-semialdehyde dehydrogenase (488 aa).

221-226 (GSSRTG) provides a ligand contact to NAD(+). Residues Glu-244 and Cys-278 contribute to the active site.

The protein belongs to the aldehyde dehydrogenase family. AstD subfamily.

It carries out the reaction N-succinyl-L-glutamate 5-semialdehyde + NAD(+) + H2O = N-succinyl-L-glutamate + NADH + 2 H(+). It functions in the pathway amino-acid degradation; L-arginine degradation via AST pathway; L-glutamate and succinate from L-arginine: step 4/5. Its function is as follows. Catalyzes the NAD-dependent reduction of succinylglutamate semialdehyde into succinylglutamate. This chain is N-succinylglutamate 5-semialdehyde dehydrogenase, found in Pseudomonas syringae pv. tomato (strain ATCC BAA-871 / DC3000).